The chain runs to 106 residues: Gibberellin-regulated protein 12 (106 aa).

The N-terminal stretch at 1–22 is a signal peptide; sequence MMKLIVVFVISSLLFATQFSNG.

Belongs to the GASA family. Post-translationally, six disulfide bonds may be present.

It localises to the secreted. Its function is as follows. Gibberellin-regulated protein that may function in hormonal controlled steps of development such as seed germination, flowering and seed maturation. The chain is Gibberellin-regulated protein 12 (GASA12) from Arabidopsis thaliana (Mouse-ear cress).